The sequence spans 376 residues: Probable allantoicase (376 aa).

Belongs to the allantoicase family.

The catalysed reaction is allantoate + H2O = (S)-ureidoglycolate + urea. It functions in the pathway nitrogen metabolism; (S)-allantoin degradation; (S)-ureidoglycolate from allantoate (aminidohydrolase route): step 1/1. This chain is Probable allantoicase, found in Streptomyces coelicolor (strain ATCC BAA-471 / A3(2) / M145).